The sequence spans 619 residues: Secretogranin-2 (619 aa).

The N-terminal stretch at 1–30 (MTESKAYRFGAVLLLIHLIFLVPGTEAASF) is a signal peptide. At Tyr153 the chain carries Sulfotyrosine. Residues Ser176 and Ser270 each carry the phosphoserine modification. The interval 247–307 (VGGEDWSPME…RKESKDQLSE (61 aa)) is disordered. 2 stretches are compositionally biased toward basic and acidic residues: residues 255–286 (MEEKIETQTQEEVRDSKENTEKNEQINEEMKR) and 295–307 (EGNRKESKDQLSE). 4 positions are modified to phosphoserine: Ser434, Ser534, Ser557, and Ser558.

The protein belongs to the chromogranin/secretogranin protein family. As to quaternary structure, interacts with Secretogranin III/SCG3. In terms of tissue distribution, brain. Expression in the pituitary is restricted to the anterior lobe. Expression in the hypothalamus is observed in the neuronal cells and neurons of arcuate nucleus, supraoptic nucleus and median eminence (at protein level).

It is found in the secreted. Functionally, neuroendocrine protein of the granin family that regulates the biogenesis of secretory granules. This chain is Secretogranin-2 (Scg2), found in Rattus norvegicus (Rat).